A 125-amino-acid polypeptide reads, in one-letter code: Snaclec alboaggregin-A subunit beta (125 aa).

Residues 1 to 125 (GFDCPFGWSS…TRYPVCKFXG (125 aa)) form the C-type lectin domain. 3 disulfides stabilise this stretch: Cys-4/Cys-15, Cys-32/Cys-121, and Cys-98/Cys-113.

The protein belongs to the snaclec family. In terms of assembly, heterotetramer of the subunits alpha, alpha', beta and beta'; disulfide-linked. As to expression, expressed by the venom gland.

The protein localises to the secreted. Functionally, potent platelet activator that aggregates platelets via both GPIbalpha (GP1BA) and GPVI (GP6). Induces a tyrosine phosphorylation profile in platelets that resembles this produced by collagen, involving the time dependent tyrosine phosphorylation of Fc receptor gamma chain (FCGR1A), phospholipase Cgamma2 (PLCG2), and LAT. In Trimeresurus albolabris (White-lipped pit viper), this protein is Snaclec alboaggregin-A subunit beta.